The primary structure comprises 257 residues: NAD-capped RNA hydrolase NudC (257 aa).

Lys-25 and Arg-69 together coordinate substrate. Zn(2+) is bound by residues Cys-98 and Cys-101. Glu-111 is a substrate binding site. Zn(2+) contacts are provided by Cys-116 and Cys-119. Tyr-124 lines the substrate pocket. A Nudix hydrolase domain is found at 125-248; it reads PQIAPCIIVA…TVARRLIEDT (124 aa). A divalent metal cation contacts are provided by Ala-158, Glu-174, and Glu-178. The Nudix box signature appears at 159-180; it reads GFVEVGETLEQAVAREVMEESG. Residue 192–199 coordinates substrate; sequence QPWPFPQS. Glu-219 serves as a coordination point for a divalent metal cation. Ala-241 serves as a coordination point for substrate.

This sequence belongs to the Nudix hydrolase family. NudC subfamily. In terms of assembly, homodimer. Mg(2+) is required as a cofactor. It depends on Mn(2+) as a cofactor. Zn(2+) serves as cofactor.

It carries out the reaction a 5'-end NAD(+)-phospho-ribonucleoside in mRNA + H2O = a 5'-end phospho-adenosine-phospho-ribonucleoside in mRNA + beta-nicotinamide D-ribonucleotide + 2 H(+). The catalysed reaction is NAD(+) + H2O = beta-nicotinamide D-ribonucleotide + AMP + 2 H(+). The enzyme catalyses NADH + H2O = reduced beta-nicotinamide D-ribonucleotide + AMP + 2 H(+). MRNA decapping enzyme that specifically removes the nicotinamide adenine dinucleotide (NAD) cap from a subset of mRNAs by hydrolyzing the diphosphate linkage to produce nicotinamide mononucleotide (NMN) and 5' monophosphate mRNA. The NAD-cap is present at the 5'-end of some mRNAs and stabilizes RNA against 5'-processing. Has preference for mRNAs with a 5'-end purine. Catalyzes the hydrolysis of a broad range of dinucleotide pyrophosphates. The chain is NAD-capped RNA hydrolase NudC from Escherichia fergusonii (strain ATCC 35469 / DSM 13698 / CCUG 18766 / IAM 14443 / JCM 21226 / LMG 7866 / NBRC 102419 / NCTC 12128 / CDC 0568-73).